The sequence spans 187 residues: GTP cyclohydrolase 1 (187 aa).

Cysteine 81, histidine 84, and cysteine 152 together coordinate Zn(2+).

This sequence belongs to the GTP cyclohydrolase I family. In terms of assembly, homomer.

The enzyme catalyses GTP + H2O = 7,8-dihydroneopterin 3'-triphosphate + formate + H(+). It participates in cofactor biosynthesis; 7,8-dihydroneopterin triphosphate biosynthesis; 7,8-dihydroneopterin triphosphate from GTP: step 1/1. This Pyrobaculum neutrophilum (strain DSM 2338 / JCM 9278 / NBRC 100436 / V24Sta) (Thermoproteus neutrophilus) protein is GTP cyclohydrolase 1.